Here is a 133-residue protein sequence, read N- to C-terminus: Alcohol dehydrogenase, 15 kDa subunit (133 aa).

An N-terminal signal peptide occupies residues 1 to 24; it reads MFRRIVPVLGLALGLGLASQAAMA. Residues 23–43 form a disordered region; it reads MAQEQSPPPPPAVQGTPGKDF. The residue at position 25 (Gln-25) is a Pyrrolidone carboxylic acid.

In terms of assembly, the alcohol dehydrogenase multicomponent enzyme system is composed of a dehydrogenase subunit I (AdhA), a cytochrome c subunit II (AdhB) and a subunit III (AdhS).

The protein resides in the cell membrane. Functionally, part of the alcohol dehydrogenase multicomponent enzyme system which is involved in the production of acetic acid and in the ethanol oxidase respiratory chain. Does not play an obligatory role for the alcohol dehydrogenase (ADH) activity. The protein is Alcohol dehydrogenase, 15 kDa subunit of Gluconobacter oxydans (strain 621H) (Gluconobacter suboxydans).